A 217-amino-acid polypeptide reads, in one-letter code: MAEVTAAQVKELRERTGAGMMDCKKALNEVGGNMDKAIDFLREKGLAAAAKKEGRIAAEGIVEAYIHGGGRIGVMLELNCETDFVANTDGFKQFARDIALQIAAAKPRYLAKADVPEEELEHEKNILRAQALNEGKPEKIVDKMVEGRISKFYKEVCLLEQEFVKDPDKTINDLVLEKTAKIGERIVIRRFTRYEMGEGIEKREEDFAAEVMKEMNR.

The tract at residues threonine 82 to valine 85 is involved in Mg(2+) ion dislocation from EF-Tu.

It belongs to the EF-Ts family.

The protein localises to the cytoplasm. Its function is as follows. Associates with the EF-Tu.GDP complex and induces the exchange of GDP to GTP. It remains bound to the aminoacyl-tRNA.EF-Tu.GTP complex up to the GTP hydrolysis stage on the ribosome. The sequence is that of Elongation factor Ts from Desulfitobacterium hafniense (strain DSM 10664 / DCB-2).